Here is a 346-residue protein sequence, read N- to C-terminus: D-alanine--D-alanine ligase (346 aa).

One can recognise an ATP-grasp domain in the interval 133-326 (KFLAQKAGVK…LANSLPKERE (194 aa)). 159–209 (YPIILKPARLGSSIGVSVVHDDSELAYAKDVAFEFDKDVLVEPFIKGVKEY) is a binding site for ATP. Residues Asp282, Glu294, and Asn296 each coordinate Mg(2+).

It belongs to the D-alanine--D-alanine ligase family. Requires Mg(2+) as cofactor. Mn(2+) serves as cofactor.

The protein localises to the cytoplasm. The enzyme catalyses 2 D-alanine + ATP = D-alanyl-D-alanine + ADP + phosphate + H(+). It functions in the pathway cell wall biogenesis; peptidoglycan biosynthesis. In terms of biological role, cell wall formation. The polypeptide is D-alanine--D-alanine ligase (Campylobacter concisus (strain 13826)).